Reading from the N-terminus, the 465-residue chain is Muscarinic acetylcholine receptor M2 (465 aa).

The Extracellular segment spans residues 1–21 (MNNSTNSSNNVALTSPYKTFE). N-linked (GlcNAc...) asparagine glycosylation is found at Asn2, Asn3, and Asn6. The chain crosses the membrane as a helical span at residues 22 to 44 (VVFIVLVAGSLSLVTIIGNILVM). The Cytoplasmic segment spans residues 45–58 (VSIKVNRHLQTVNN). A helical transmembrane segment spans residues 59–79 (YFLFSLACADLIIGVFSMNLY). Topologically, residues 80–96 (TLYTVIGYWPLGPVVCD) are extracellular. A disulfide bridge links Cys95 with Cys175. Residues 97–118 (LWLALDYVVSNASVMNLLIISF) form a helical membrane-spanning segment. Residues 119-121 (DRY) carry the Important for signaling motif. Residues 119–138 (DRYFCVTKPLTYPVKRTTKM) lie on the Cytoplasmic side of the membrane. The helical transmembrane segment at 139-161 (AGMMIAAAWVLSFILWAPAILFW) threads the bilayer. Residues 162-183 (QFIVGVRTVEDGECYIQFFSNA) are Extracellular-facing. A helical transmembrane segment spans residues 184–208 (AVTFGTAIAAFYLPVIIMTVLYWHI). At 209-386 (SRASKSRIKK…PPSREKKVTR (178 aa)) the chain is on the cytoplasmic side. The disordered stretch occupies residues 217–319 (KKDKKEPVAN…SVGHSKDENS (103 aa)). Phosphoserine is present on Ser231. Over residues 253-269 (GLEHNKIQNGKTPRDAV) the composition is skewed to basic and acidic residues. Polar residues-rich tracts occupy residues 283-292 (NDSTSVSAVA) and 303-312 (DENTVSTSVG). A helical transmembrane segment spans residues 387 to 409 (TILAILLAFIITWAPYNVMVLIN). Residues 410 to 417 (TFCAPCIP) lie on the Extracellular side of the membrane. A disulfide bridge links Cys412 with Cys415. The helical transmembrane segment at 418–441 (NTVWTIGYWLCYINSTINPACYAL) threads the bilayer. An Important for signaling motif is present at residues 435–439 (NPACY). Residues 442–465 (CNATFKKTFKHLLMCHYKNIGATR) lie on the Cytoplasmic side of the membrane. Phosphothreonine is present on residues Thr445, Thr449, and Thr464.

Belongs to the G-protein coupled receptor 1 family. Muscarinic acetylcholine receptor subfamily. CHRM2 sub-subfamily. In terms of assembly, interacts with ARRB1 and ARRB2. Interacts with RACK1; the interaction regulates CHRM2 internalization. Phosphorylated in response to agonist treatment.

It is found in the cell membrane. It localises to the postsynaptic cell membrane. The muscarinic acetylcholine receptor mediates various cellular responses, including inhibition of adenylate cyclase, breakdown of phosphoinositides and modulation of potassium channels through the action of G proteins. Primary transducing effect is adenylate cyclase inhibition. Signaling promotes phospholipase C activity, leading to the release of inositol trisphosphate (IP3); this then triggers calcium ion release into the cytosol. In Bos taurus (Bovine), this protein is Muscarinic acetylcholine receptor M2 (CHRM2).